The sequence spans 356 residues: D-alanine--D-alanine ligase (356 aa).

Residues 134 to 339 (KQLFEHRGLP…YSDLITKLID (206 aa)) form the ATP-grasp domain. Position 167 to 222 (167 to 222 (KDKLTYPVFVKPANLGSSVGISKCNNEDELKSGIEEAFQFDRKLVIEQGINAREVE)) interacts with ATP. The Mg(2+) site is built by D293, E306, and N308.

The protein belongs to the D-alanine--D-alanine ligase family. Mg(2+) is required as a cofactor. It depends on Mn(2+) as a cofactor.

The protein resides in the cytoplasm. It catalyses the reaction 2 D-alanine + ATP = D-alanyl-D-alanine + ADP + phosphate + H(+). It participates in cell wall biogenesis; peptidoglycan biosynthesis. In terms of biological role, cell wall formation. In Staphylococcus haemolyticus (strain JCSC1435), this protein is D-alanine--D-alanine ligase.